The following is a 219-amino-acid chain: Adenylate kinase (219 aa).

ATP is bound at residue 13–18 (GAGKGT). The segment at 33–62 (STGDIFRAAIKNETKMGLEAKKYIDAGNLV) is NMP. Residues T34, R39, 60 to 62 (NLV), 88 to 91 (GYPR), and Q95 contribute to the AMP site. The tract at residues 129-167 (GRFICRTCGATYHKLYNKPKVEGTCDVCGGHDFYQRDDD) is LID. R130 serves as a coordination point for ATP. Positions 133 and 136 each coordinate Zn(2+). 139-140 (TY) is an ATP binding site. Zn(2+) is bound by residues C153 and C156. Residues R164 and R175 each contribute to the AMP site. Residue R203 coordinates ATP.

It belongs to the adenylate kinase family. Monomer.

Its subcellular location is the cytoplasm. It catalyses the reaction AMP + ATP = 2 ADP. It functions in the pathway purine metabolism; AMP biosynthesis via salvage pathway; AMP from ADP: step 1/1. In terms of biological role, catalyzes the reversible transfer of the terminal phosphate group between ATP and AMP. Plays an important role in cellular energy homeostasis and in adenine nucleotide metabolism. The sequence is that of Adenylate kinase from Lactiplantibacillus plantarum (strain ATCC BAA-793 / NCIMB 8826 / WCFS1) (Lactobacillus plantarum).